Here is a 112-residue protein sequence, read N- to C-terminus: Small ribosomal subunit protein bS16 (112 aa).

This sequence belongs to the bacterial ribosomal protein bS16 family.

In Karelsulcia muelleri (strain GWSS) (Sulcia muelleri), this protein is Small ribosomal subunit protein bS16.